We begin with the raw amino-acid sequence, 446 residues long: UDP-N-acetylmuramate--L-alanine ligase (446 aa).

122-128 lines the ATP pocket; sequence GTHGKTT.

This sequence belongs to the MurCDEF family.

The protein localises to the cytoplasm. It carries out the reaction UDP-N-acetyl-alpha-D-muramate + L-alanine + ATP = UDP-N-acetyl-alpha-D-muramoyl-L-alanine + ADP + phosphate + H(+). The protein operates within cell wall biogenesis; peptidoglycan biosynthesis. In terms of biological role, cell wall formation. This chain is UDP-N-acetylmuramate--L-alanine ligase, found in Nocardioides sp. (strain ATCC BAA-499 / JS614).